Consider the following 218-residue polypeptide: MGQKINPLGFRLGTTQGHHSLWFSQPKNYSEGLQEDKKIRDCIKNYVQKNMRTSSGIEGIARIEIQKRIDLIQVIIFMGFPKLLIESRPRGIEELQMTLQKEFNCVNRKLNIAVTRIAKPYGNPNILAEFIAGQLKNRVSFRKAMKKAIELTEQADTKGIQIQIAGRIDGKEIARVEWIREGRVPLQTIRAKIDYCSYTVRTIYGILGIKIWIFLDEE.

Positions 47–118 (VQKNMRTSSG…KLNIAVTRIA (72 aa)) constitute a KH type-2 domain.

It belongs to the universal ribosomal protein uS3 family. In terms of assembly, part of the 30S ribosomal subunit.

The protein resides in the plastid. It localises to the chloroplast. This chain is Small ribosomal subunit protein uS3c (rps3), found in Solanum bulbocastanum (Wild potato).